The chain runs to 711 residues: Polyribonucleotide nucleotidyltransferase (711 aa).

Mg(2+) contacts are provided by Asp486 and Asp492. A KH domain is found at 553–612 (PRIHTIKISTDKIKDVIGKGGSVIRALTEETGTTIEIEDDGTVKIAATDGEKAKYAIRRI). The S1 motif domain occupies 622-690 (GRIYNGKVTR…RQGRVRLSIK (69 aa)). Residues 689 to 711 (IKEATEQTQPAAAPEAPTSEQGE) form a disordered region. Residues 694–711 (EQTQPAAAPEAPTSEQGE) are compositionally biased toward low complexity.

It belongs to the polyribonucleotide nucleotidyltransferase family. As to quaternary structure, component of the RNA degradosome, which is a multiprotein complex involved in RNA processing and mRNA degradation. Requires Mg(2+) as cofactor.

It is found in the cytoplasm. It catalyses the reaction RNA(n+1) + phosphate = RNA(n) + a ribonucleoside 5'-diphosphate. Its function is as follows. Involved in mRNA degradation. Catalyzes the phosphorolysis of single-stranded polyribonucleotides processively in the 3'- to 5'-direction. The sequence is that of Polyribonucleotide nucleotidyltransferase from Salmonella arizonae (strain ATCC BAA-731 / CDC346-86 / RSK2980).